The primary structure comprises 942 residues: UvrABC system protein A (942 aa).

32 to 39 (GLSGSGKS) is an ATP binding site. The C4-type zinc-finger motif lies at 251-278 (CPVCGFTVPELEPRLFSFNAPFGSCPTC). ABC transporter domains follow at residues 308-589 (WNPI…KKSI) and 609-937 (GNGR…HYLK). ATP is bound at residue 641–648 (GVSGSGKS). The segment at 740–766 (CEACSGDGIIKIEMHFLPDVYVPCEVC) adopts a C4-type zinc-finger fold.

This sequence belongs to the ABC transporter superfamily. UvrA family. As to quaternary structure, forms a heterotetramer with UvrB during the search for lesions.

Its subcellular location is the cytoplasm. Functionally, the UvrABC repair system catalyzes the recognition and processing of DNA lesions. UvrA is an ATPase and a DNA-binding protein. A damage recognition complex composed of 2 UvrA and 2 UvrB subunits scans DNA for abnormalities. When the presence of a lesion has been verified by UvrB, the UvrA molecules dissociate. In Streptococcus pyogenes serotype M3 (strain ATCC BAA-595 / MGAS315), this protein is UvrABC system protein A.